The chain runs to 249 residues: Tetrahydromethanopterin S-methyltransferase subunit D (249 aa).

Helical transmembrane passes span 9–29, 47–67, 75–95, 138–158, 183–203, and 224–244; these read ILWL…VHFV, GTVQ…GFMM, LILA…MIVG, VSFV…ALVY, LVGI…VIPS, and AVIS…IAIS.

It belongs to the MtrD family. As to quaternary structure, the complex is composed of 8 subunits; MtrA, MtrB, MtrC, MtrD, MtrE, MtrF, MtrG and MtrH.

The protein resides in the cell membrane. The enzyme catalyses 5-methyl-5,6,7,8-tetrahydromethanopterin + coenzyme M + 2 Na(+)(in) = 5,6,7,8-tetrahydromethanopterin + methyl-coenzyme M + 2 Na(+)(out). Its pathway is one-carbon metabolism; methanogenesis from CO(2); methyl-coenzyme M from 5,10-methylene-5,6,7,8-tetrahydromethanopterin: step 2/2. Functionally, part of a complex that catalyzes the formation of methyl-coenzyme M and tetrahydromethanopterin from coenzyme M and methyl-tetrahydromethanopterin. This is an energy-conserving, sodium-ion translocating step. The chain is Tetrahydromethanopterin S-methyltransferase subunit D from Methanosarcina acetivorans (strain ATCC 35395 / DSM 2834 / JCM 12185 / C2A).